The sequence spans 204 residues: Leucyl/phenylalanyl-tRNA--protein transferase (204 aa).

This sequence belongs to the L/F-transferase family.

The protein resides in the cytoplasm. The enzyme catalyses N-terminal L-lysyl-[protein] + L-leucyl-tRNA(Leu) = N-terminal L-leucyl-L-lysyl-[protein] + tRNA(Leu) + H(+). It catalyses the reaction N-terminal L-arginyl-[protein] + L-leucyl-tRNA(Leu) = N-terminal L-leucyl-L-arginyl-[protein] + tRNA(Leu) + H(+). It carries out the reaction L-phenylalanyl-tRNA(Phe) + an N-terminal L-alpha-aminoacyl-[protein] = an N-terminal L-phenylalanyl-L-alpha-aminoacyl-[protein] + tRNA(Phe). Functionally, functions in the N-end rule pathway of protein degradation where it conjugates Leu, Phe and, less efficiently, Met from aminoacyl-tRNAs to the N-termini of proteins containing an N-terminal arginine or lysine. This Rhizobium etli (strain ATCC 51251 / DSM 11541 / JCM 21823 / NBRC 15573 / CFN 42) protein is Leucyl/phenylalanyl-tRNA--protein transferase.